A 214-amino-acid chain; its full sequence is External core antigen (214 aa).

The N-terminal stretch at 1–19 is a signal peptide; that stretch reads MQLFHLCLIISCTCPTLQA. The tract at residues 25–27 is HBEAG; the sequence is GWL. The interval 164 to 214 is disordered; sequence PNAPILSTLPETTVVRRRDRGRSPRRRTPSPRRRRSQSPRRRRSQSRESQC. Residues 178–207 show a composition bias toward basic residues; the sequence is VRRRDRGRSPRRRTPSPRRRRSQSPRRRRS. One copy of the 1; half-length repeat lies at 186-192; it reads SPRRRTP. Residues 186-208 form a 3 X 8 AA repeats of S-P-R-R-R-R-S-Q region; that stretch reads SPRRRTPSPRRRRSQSPRRRRSQ. Residues 186 to 214 constitute a propeptide that is removed on maturation; that stretch reads SPRRRTPSPRRRRSQSPRRRRSQSRESQC. Tandem repeats lie at residues 193 to 200 and 201 to 208.

The protein belongs to the orthohepadnavirus precore antigen family. In terms of assembly, homodimerizes. Phosphorylated. Post-translationally, cleaved by host furin.

Its subcellular location is the secreted. The protein localises to the host nucleus. May regulate immune response to the intracellular capsid in acting as a T-cell tolerogen, by having an immunoregulatory effect which prevents destruction of infected cells by cytotoxic T-cells. This immune regulation may predispose to chronicity during perinatal infections and prevent severe liver injury during adult infections. This chain is External core antigen, found in Homo sapiens (Human).